Here is a 503-residue protein sequence, read N- to C-terminus: MASLLLTSSSMITTSCRSMVLRSGLPIGSSFPSLRLTRPYDKATLFVSCCSAESKKVATSATDLKPIMERRPEYIPNKLPHKNYVRVLDTTLRDGEQSPGAALTPPQKLEIARQLAKLRVDIMEVGFPVSSEEEFEAIKTIAKTVGNEVDEETGYVPVICGIARCKKRDIEATWEALKYAKRPRVMLFTSTSEIHMKYKLKKTKEEVIEMAVNSVKYAKSLGFKDIQFGCEDGGRTEKDFICKILGESIKAGATTVGFADTVGINMPQEFGELVAYVIENTPGADDIVFAIHCHNDLGVATANTISGICAGARQVEVTINGIGERSGNAPLEEVVMALKCRGESLMDGVYTKIDSRQIMATSKMVQEHTGMYVQPHKPIVGDNCFVHESGIHQDGILKNRSTYEILSPEDVGIVKSENSGIVLGKLSGRHAVKDRLKELGYEISDEKFNDIFSRYRELTKDKKRITDADLKALVVNGAEISSEKLNSKGINDLMSSPQISAVV.

A chloroplast-targeting transit peptide spans 1–51 (MASLLLTSSSMITTSCRSMVLRSGLPIGSSFPSLRLTRPYDKATLFVSCCS). Residues 85–359 (VRVLDTTLRD…YTKIDSRQIM (275 aa)) enclose the Pyruvate carboxyltransferase domain.

The protein belongs to the alpha-IPM synthase/homocitrate synthase family. It depends on Mn(2+) as a cofactor. Highly expressed in roots, leaves, and siliques. Lower amounts in stems and flowers.

It localises to the plastid. It is found in the chloroplast. The enzyme catalyses an omega-(methylsulfanyl)-2-oxoalkanoate + acetyl-CoA + H2O = a 2-(omega-methylsulfanyl)alkylmalate + CoA + H(+). Its activity is regulated as follows. Not activated by ATP. Determines the side chain length of aliphatic glucosinolate structures. Accepts all the omega-methylthio-2-oxoalkanoic acids needed to form the known C3 to C8 glucosinolates. Also able to convert pyruvate to citramalate, 2-oxoisovalerate to isopropylmalate, 4-methyl-2-oxopentanoate and 5-methyl-2-oxohexanoate for Leu-derived glucosinolates, 3-methyl-2-oxopentanoate for Ile-derived glucosinolates and phenylpyruvate to phenylethylglucosinolate. The sequence is that of Methylthioalkylmalate synthase 3, chloroplastic (MAM3) from Arabidopsis thaliana (Mouse-ear cress).